The sequence spans 65 residues: Large ribosomal subunit protein bL35 (65 aa).

It belongs to the bacterial ribosomal protein bL35 family.

This Nitrosomonas europaea (strain ATCC 19718 / CIP 103999 / KCTC 2705 / NBRC 14298) protein is Large ribosomal subunit protein bL35.